The chain runs to 127 residues: uncharacterized protein (127 aa).

An N-terminal signal peptide occupies residues 1–23 (MSKPLKFLLWSSLALLLLQIGSG).

This is an uncharacterized protein from Arabidopsis thaliana (Mouse-ear cress).